The following is a 290-amino-acid chain: 6-phospho-5-dehydro-2-deoxy-D-gluconate aldolase (290 aa).

Asp85 functions as the Proton donor in the catalytic mechanism. Positions 86 and 180 each coordinate Zn(2+). Gly181 provides a ligand contact to dihydroxyacetone phosphate. His208 serves as a coordination point for Zn(2+). Residues Gly209–Ser211 and Asn230–Thr233 each bind dihydroxyacetone phosphate. Thr233 bears the Phosphothreonine mark.

The protein belongs to the class II fructose-bisphosphate aldolase family. IolJ subfamily. Zn(2+) is required as a cofactor.

The catalysed reaction is 6-phospho-5-dehydro-2-deoxy-D-gluconate = 3-oxopropanoate + dihydroxyacetone phosphate. The protein operates within polyol metabolism; myo-inositol degradation into acetyl-CoA; acetyl-CoA from myo-inositol: step 6/7. Produces dihydroxyacetone phosphate (DHAP or glycerone phosphate) and malonic semialdehyde (MSA or 3-oxopropanoate) from 6-phospho-5-dehydro-2-deoxy-D-gluconate (DKGP). The chain is 6-phospho-5-dehydro-2-deoxy-D-gluconate aldolase (iolJ) from Bacillus velezensis (strain DSM 23117 / BGSC 10A6 / LMG 26770 / FZB42) (Bacillus amyloliquefaciens subsp. plantarum).